A 434-amino-acid chain; its full sequence is Probable G-protein coupled receptor B0563.6 (434 aa).

Asn12 carries N-linked (GlcNAc...) asparagine glycosylation. 2 helical membrane passes run 30–50 and 65–85; these read VLPC…MVLA and LAVA…TEYL. The N-linked (GlcNAc...) asparagine glycan is linked to Asn88. Transmembrane regions (helical) follow at residues 105–125 and 147–167; these read LMLT…VALS and ATRA…PYAI. N-linked (GlcNAc...) asparagine glycosylation is present at Asn181. 2 helical membrane passes run 208–228 and 258–278; these read ILRF…MIAF and GGTV…LLLI. 2 N-linked (GlcNAc...) asparagine glycosylation sites follow: Asn429 and Asn430.

The protein belongs to the G-protein coupled receptor 1 family.

The protein resides in the cell membrane. Its function is as follows. Not known. Putative receptor. The chain is Probable G-protein coupled receptor B0563.6 from Caenorhabditis elegans.